The chain runs to 453 residues: UDP-N-acetylmuramate--L-alanyl-gamma-D-glutamyl-meso-2,6-diaminoheptandioate ligase (453 aa).

111 to 117 is an ATP binding site; it reads GTHGKTT.

It belongs to the MurCDEF family. Mpl subfamily. The cofactor is Mg(2+).

It catalyses the reaction UDP-N-acetyl-alpha-D-muramate + L-alanyl-gamma-D-glutamyl-meso-2,6-diaminopimelate + ATP = UDP-N-acetyl-alpha-D-muramoyl-L-alanyl-gamma-D-glutamyl-meso-2,6-diaminopimelate + ADP + phosphate + H(+). It participates in cell wall biogenesis; peptidoglycan recycling. Reutilizes the intact tripeptide L-alanyl-gamma-D-glutamyl-meso-diaminopimelate by linking it to UDP-N-acetylmuramate. The protein is UDP-N-acetylmuramate--L-alanyl-gamma-D-glutamyl-meso-2,6-diaminoheptandioate ligase of Haemophilus influenzae (strain ATCC 51907 / DSM 11121 / KW20 / Rd).